A 763-amino-acid polypeptide reads, in one-letter code: MSELLSFALFLASVLIYAWKAGRNTWWFAATLTVLGLFVVLNITLFASDYFTGDGINDAVLYTLTNSLTGAGVSKYILPGIGIVLGLAAVFGALGWILRRRRHHPHHFGYSLLALLLALGSVDASPAFRQITELVKSQSRDGDPDFAAYYKEPSKTIPDPKLNLVYIYGESLERTYFDNEAFPDLTPELGALKNEGLDFSHTQQLPGTDYTIAGMVASQCGIPLFAPFEGNASASVSSFFPQNICLGDIMKNSGYQNYFVQGANLRFAGKDVFLKSHGFDHLYGSEELKSVVADPHYRNDWGFYDDTVLDEAWKKFEELSRSGQRFSLFTLTVDTHHPDGFISRTCNRKKYDFDGKPNQSFSAVSCSQENIATFINKIKASPWFKDTVIVVSSDHLAMNNTAWKYLNKQDRNNLFFVIRGDKPQQETLAVKRNTMDNGATVLDILGGDNYLGLGRSSLSGQSMSEIFLNIKEKTLAWKPDIIRLWKFPKEMKEFTIDQQKNMIAFSGSHFRLPLLLRVSDKRVEPLPESEYSAPLRFQLADFAPRDNFVWVDRCYKMAQLWAPELALSTDWCVSQGQLGGQQIVQHVDKAIWKGKTAFKDTVIDMARYKGNVDTLKIVDNDIRYKADSFIFNVAGAPEEVKQFSGISRPESWGRWSNAQLGDEVKIEYKHPLPKKFDLVITAKAYGNNASRPIPVRVGNEEQTLVLGNEVTTTTLHFDNPTDADTLVIVPPEPVSTNEGNILGHSPRKLGIGMVEIKVVEREG.

4 helical membrane-spanning segments follow: residues 1 to 21, 26 to 46, 77 to 97, and 108 to 128; these read MSELLSFALFLASVLIYAWKA, WWFAATLTVLGLFVVLNITLF, ILPGIGIVLGLAAVFGALGWI, and FGYSLLALLLALGSVDASPAF.

This sequence belongs to the OpgB family.

Its subcellular location is the cell inner membrane. It catalyses the reaction a phosphatidylglycerol + a membrane-derived-oligosaccharide D-glucose = a 1,2-diacyl-sn-glycerol + a membrane-derived-oligosaccharide 6-(glycerophospho)-D-glucose.. Its pathway is glycan metabolism; osmoregulated periplasmic glucan (OPG) biosynthesis. In terms of biological role, transfers a phosphoglycerol residue from phosphatidylglycerol to the membrane-bound nascent glucan backbones. The polypeptide is Phosphoglycerol transferase I (Escherichia coli (strain UTI89 / UPEC)).